The sequence spans 349 residues: Fructose-1,6-bisphosphatase class 1 (349 aa).

Residues Glu91, Asp110, Leu112, and Asp113 each coordinate Mg(2+). Residues 113–116 (DGSS) and Asn205 contribute to the substrate site. Glu277 provides a ligand contact to Mg(2+).

The protein belongs to the FBPase class 1 family. As to quaternary structure, homotetramer. The cofactor is Mg(2+).

It is found in the cytoplasm. It catalyses the reaction beta-D-fructose 1,6-bisphosphate + H2O = beta-D-fructose 6-phosphate + phosphate. It functions in the pathway carbohydrate biosynthesis; gluconeogenesis. The sequence is that of Fructose-1,6-bisphosphatase class 1 from Rhizobium meliloti (strain 1021) (Ensifer meliloti).